Reading from the N-terminus, the 450-residue chain is Chitobiosyldiphosphodolichol beta-mannosyltransferase (450 aa).

The Lumenal segment spans residues M1–T13. The helical transmembrane segment at L14 to Y34 threads the bilayer. At G35 to R106 the chain is on the cytoplasmic side. The helical intramembrane region spans S107–W127. Over E128–A450 the chain is Cytoplasmic.

Belongs to the glycosyltransferase group 1 family.

The protein resides in the endoplasmic reticulum membrane. It catalyses the reaction an N,N'-diacetylchitobiosyl-diphospho-di-trans,poly-cis-dolichol + GDP-alpha-D-mannose = a beta-D-Man-(1-&gt;4)-beta-D-GlcNAc-(1-&gt;4)-alpha-D-GlcNAc-diphospho-di-trans,poly-cis-dolichol + GDP + H(+). It participates in protein modification; protein glycosylation. Functionally, participates in the formation of the lipid-linked precursor oligosaccharide for N-glycosylation. Involved in assembling the dolichol-pyrophosphate-GlcNAc(2)-Man(5) intermediate on the cytoplasmic surface of the ER. In Candida glabrata (strain ATCC 2001 / BCRC 20586 / JCM 3761 / NBRC 0622 / NRRL Y-65 / CBS 138) (Yeast), this protein is Chitobiosyldiphosphodolichol beta-mannosyltransferase (ALG1).